A 196-amino-acid polypeptide reads, in one-letter code: MIPVVIEQTSRGERSYDIYSRLLKDRIIMLTGPVEDNMANSVIAQLLFLDAQDNTKDIYLYVNTPGGSVSAGLAIVDTMNFIKADVQTIVMGMAASMGTVIASSGTKGKRFMLPNAEYMIHQPMGGTGGGTQQTDMAIAAEHLLKTRHRLEKILAQNAGKTIKQIHKDAERDYWMSAEETLAYGFIDEIMENNELK.

The active-site Nucleophile is the serine 96. Residue histidine 121 is part of the active site.

The protein belongs to the peptidase S14 family. In terms of assembly, fourteen ClpP subunits assemble into 2 heptameric rings which stack back to back to give a disk-like structure with a central cavity, resembling the structure of eukaryotic proteasomes.

It is found in the cytoplasm. It carries out the reaction Hydrolysis of proteins to small peptides in the presence of ATP and magnesium. alpha-casein is the usual test substrate. In the absence of ATP, only oligopeptides shorter than five residues are hydrolyzed (such as succinyl-Leu-Tyr-|-NHMec, and Leu-Tyr-Leu-|-Tyr-Trp, in which cleavage of the -Tyr-|-Leu- and -Tyr-|-Trp bonds also occurs).. Cleaves peptides in various proteins in a process that requires ATP hydrolysis. Has a chymotrypsin-like activity. Plays a major role in the degradation of misfolded proteins. The chain is ATP-dependent Clp protease proteolytic subunit from Streptococcus pyogenes serotype M3 (strain SSI-1).